Consider the following 276-residue polypeptide: Putative ABC transporter ATP-binding protein MA_4021 (276 aa).

Residues 5–247 enclose the ABC transporter domain; sequence FDLKNISYSY…DLNLLLSTNL (243 aa). 38 to 45 is an ATP binding site; sequence GSNGSGKS.

The protein belongs to the ABC transporter superfamily.

The protein localises to the cell membrane. Its function is as follows. Probably part of an ABC transporter complex. Responsible for energy coupling to the transport system. This chain is Putative ABC transporter ATP-binding protein MA_4021, found in Methanosarcina acetivorans (strain ATCC 35395 / DSM 2834 / JCM 12185 / C2A).